The sequence spans 603 residues: NADH-ubiquinone oxidoreductase chain 5 (603 aa).

15 helical membrane passes run 38–58, 87–107, 122–142, 144–160, 171–191, 211–233, 241–261, 272–292, 301–320, 325–347, 370–390, 407–429, 458–478, 482–502, and 582–602; these read SIVA…MCLD, MMFI…SLWY, LIFL…QLFI, WEGV…WWYA, AILY…WFIL, TPLL…HPWL, TPVS…FLLI, LIQT…AVCA, IVAF…IGIN, AFLH…GSII, STSL…TGFY, WALS…MILL, AAGS…ASPF, IPLY…LTAL, and GMIK…LLLI.

This sequence belongs to the complex I subunit 5 family. As to quaternary structure, core subunit of respiratory chain NADH dehydrogenase (Complex I) which is composed of 45 different subunits.

It is found in the mitochondrion inner membrane. The catalysed reaction is a ubiquinone + NADH + 5 H(+)(in) = a ubiquinol + NAD(+) + 4 H(+)(out). In terms of biological role, core subunit of the mitochondrial membrane respiratory chain NADH dehydrogenase (Complex I) which catalyzes electron transfer from NADH through the respiratory chain, using ubiquinone as an electron acceptor. Essential for the catalytic activity and assembly of complex I. This is NADH-ubiquinone oxidoreductase chain 5 (MT-ND5) from Homo sapiens (Human).